We begin with the raw amino-acid sequence, 55 residues long: Large ribosomal subunit protein bL33 (55 aa).

This sequence belongs to the bacterial ribosomal protein bL33 family.

This is Large ribosomal subunit protein bL33 from Beijerinckia indica subsp. indica (strain ATCC 9039 / DSM 1715 / NCIMB 8712).